Here is a 117-residue protein sequence, read N- to C-terminus: Large ribosomal subunit protein bL20c (117 aa).

It belongs to the bacterial ribosomal protein bL20 family.

It is found in the plastid. Its subcellular location is the chloroplast. Its function is as follows. Binds directly to 23S ribosomal RNA and is necessary for the in vitro assembly process of the 50S ribosomal subunit. It is not involved in the protein synthesizing functions of that subunit. The chain is Large ribosomal subunit protein bL20c from Lobularia maritima (Sweet alyssum).